The chain runs to 274 residues: Aspartate/glutamate leucyltransferase (274 aa).

This sequence belongs to the R-transferase family. Bpt subfamily.

It localises to the cytoplasm. The enzyme catalyses N-terminal L-glutamyl-[protein] + L-leucyl-tRNA(Leu) = N-terminal L-leucyl-L-glutamyl-[protein] + tRNA(Leu) + H(+). It carries out the reaction N-terminal L-aspartyl-[protein] + L-leucyl-tRNA(Leu) = N-terminal L-leucyl-L-aspartyl-[protein] + tRNA(Leu) + H(+). Functions in the N-end rule pathway of protein degradation where it conjugates Leu from its aminoacyl-tRNA to the N-termini of proteins containing an N-terminal aspartate or glutamate. In Ruegeria sp. (strain TM1040) (Silicibacter sp.), this protein is Aspartate/glutamate leucyltransferase.